Consider the following 138-residue polypeptide: ATP synthase subunit g, mitochondrial (138 aa).

It belongs to the ATPase g subunit family. In terms of assembly, F-type ATP synthases have 2 components, the catalytic core F(1) and the membrane-embedded component F(0), linked together by a central stalk and a peripheral stalk. The central stalk, also called rotor shaft, is often seen as part of F(1). The peripheral stalk is seen as part of F(0). F(0) contains the membrane channel next to the rotor. F-type ATP synthases form dimers but each monomer functions independently in ATP generation. The dimer consists of 17 different polypeptides: ATP1 (subunit alpha, 3 molecules per monomer, part of F(1)), ATP2 (subunit beta, 3 copies per monomer, part of F(1)), ATP3 (subunit gamma, part of the central stalk), ATP4 (subunit b, part of the peripheral stalk), ATP5/OSCP (subunit 5/OSCP, part of the peripheral stalk), ATP6 (subunit a, part of the peripheral stalk), ATP7 (subunit d, part of the peripheral stalk), ATP8 (subunit 8, part of the peripheral stalk), OLI1 (subunit c, part of the rotor, 10 molecules per monomer), ATP14 (subunit h, part of the peripheral stalk), ATP15 (subunit epsilon, part of the central stalk), ATP16 (subunit delta, part of the central stalk), ATP17 (subunit f, part of the peripheral stalk), ATP18 (subunit i/j, part of the peripheral stalk), ATP19 (subunit k, dimer-specific, at interface between monomers), ATP20 (subunit g, at interface between monomers), TIM11 (subunit e, at interface between monomers).

The protein resides in the mitochondrion inner membrane. In terms of biological role, mitochondrial membrane ATP synthase (F(1)F(0) ATP synthase or Complex V) produces ATP from ADP in the presence of a proton gradient across the membrane which is generated by electron transport complexes of the respiratory chain. F-type ATP synthases consist of two structural domains, F(1) - containing the extramembraneous catalytic core, and F(0) - containing the membrane proton channel, linked together by a central stalk and a peripheral stalk. During catalysis, ATP synthesis in the catalytic domain of F(1) is coupled via a rotary mechanism of the central stalk subunits to proton translocation. Part of the complex F(0) domain. Minor subunit located with subunit a/ATP6 in the membrane. Together with subunit e/TIM11, probably contributes to membrane curvature at the site of the ATP synthase dimer, ultimately contributing to formation of cristae. The polypeptide is ATP synthase subunit g, mitochondrial (Yarrowia lipolytica (strain CLIB 122 / E 150) (Yeast)).